A 348-amino-acid chain; its full sequence is N-acetyl-gamma-glutamyl-phosphate reductase (348 aa).

C149 is a catalytic residue.

Belongs to the NAGSA dehydrogenase family. Type 1 subfamily.

It is found in the cytoplasm. The enzyme catalyses N-acetyl-L-glutamate 5-semialdehyde + phosphate + NADP(+) = N-acetyl-L-glutamyl 5-phosphate + NADPH + H(+). The protein operates within amino-acid biosynthesis; L-arginine biosynthesis; N(2)-acetyl-L-ornithine from L-glutamate: step 3/4. In terms of biological role, catalyzes the NADPH-dependent reduction of N-acetyl-5-glutamyl phosphate to yield N-acetyl-L-glutamate 5-semialdehyde. In Cellvibrio japonicus (strain Ueda107) (Pseudomonas fluorescens subsp. cellulosa), this protein is N-acetyl-gamma-glutamyl-phosphate reductase.